Reading from the N-terminus, the 313-residue chain is Olfactory receptor 4M1 (313 aa).

Residues 1–25 (MEPANDTTVTEFILTGLSQTREVQL) lie on the Extracellular side of the membrane. An N-linked (GlcNAc...) asparagine glycan is attached at Asn5. The chain crosses the membrane as a helical span at residues 26–46 (VLFVIFLSFYLFILPVNILII). Topologically, residues 47–57 (CTIRLDSHLSS) are cytoplasmic. Residues 58–78 (PMYFLLANLAFLDIWYSSITA) form a helical membrane-spanning segment. At 79–97 (PKMLVDFFVERKIISFGGC) the chain is on the extracellular side. An intrachain disulfide couples Cys97 to Cys179. Residues 98 to 118 (IAQLFFLHFVGASEMFLLTVM) form a helical membrane-spanning segment. Residues 119–142 (AFDRYAAICRPLHYATIMNRRLCC) lie on the Cytoplasmic side of the membrane. The chain crosses the membrane as a helical span at residues 143-163 (ILVALSWTGGFVHSIIQVALI). Residues 164 to 204 (VRLPFCGPNELDNYFCDITQVVRIACANTFLEEMVMIFSSG) are Extracellular-facing. A helical membrane pass occupies residues 205 to 225 (LISVVCFIALLMSYAFLLTML). At 226-238 (KKHSSSGESTSRA) the chain is on the cytoplasmic side. The chain crosses the membrane as a helical span at residues 239-259 (ISTCYSHITIVVLMFGPSIYI). The Extracellular segment spans residues 260–270 (YARPFDSFSLD). A helical transmembrane segment spans residues 271–291 (KVVSVFHTVIFPLLNPIIYTL). At 292–313 (RNKEVKAAMRKLVNRYIFCKEK) the chain is on the cytoplasmic side.

Belongs to the G-protein coupled receptor 1 family. Highly expressed in liver but not in adipose tissue. Also expressed at high level in testis.

It is found in the cell membrane. In terms of biological role, olfactory receptor that acts as a receptor of Asprosin hormone at the surface of hepatocytes to promote hepatocyte glucose release. Also binds Asprosin in the arcuate nucleus of the hypothalamus, thereby stimulating appetite by promoting orexigenic AgRP neuronal activity. In testis, Asprosin-binding promotes sperm progressive motility and enhances male fertility. The activity of this receptor is mediated by G proteins which activate adenylyl cyclase, resulting in an elevation of intracellular cAMP. The protein is Olfactory receptor 4M1 of Mus musculus (Mouse).